Reading from the N-terminus, the 102-residue chain is NADH-quinone oxidoreductase subunit K (102 aa).

3 helical membrane-spanning segments follow: residues 5-25 (LSHF…GIIL), 30-50 (IIVV…NLVS), and 62-82 (VFSL…LAIL).

Belongs to the complex I subunit 4L family. In terms of assembly, NDH-1 is composed of 14 different subunits. Subunits NuoA, H, J, K, L, M, N constitute the membrane sector of the complex.

The protein resides in the cell inner membrane. It carries out the reaction a quinone + NADH + 5 H(+)(in) = a quinol + NAD(+) + 4 H(+)(out). NDH-1 shuttles electrons from NADH, via FMN and iron-sulfur (Fe-S) centers, to quinones in the respiratory chain. The immediate electron acceptor for the enzyme in this species is believed to be ubiquinone. Couples the redox reaction to proton translocation (for every two electrons transferred, four hydrogen ions are translocated across the cytoplasmic membrane), and thus conserves the redox energy in a proton gradient. The polypeptide is NADH-quinone oxidoreductase subunit K (Methylocella silvestris (strain DSM 15510 / CIP 108128 / LMG 27833 / NCIMB 13906 / BL2)).